The chain runs to 81 residues: Photosystem I iron-sulfur center (81 aa).

2 4Fe-4S ferredoxin-type domains span residues 2–31 and 37–68; these read SHSV…MVPW and GQIA…VRVY. The [4Fe-4S] cluster site is built by Cys11, Cys14, Cys17, Cys21, Cys48, Cys51, Cys54, and Cys58.

In terms of assembly, the eukaryotic PSI reaction center is composed of at least 11 subunits. [4Fe-4S] cluster serves as cofactor.

It is found in the plastid. Its subcellular location is the chloroplast thylakoid membrane. The enzyme catalyses reduced [plastocyanin] + hnu + oxidized [2Fe-2S]-[ferredoxin] = oxidized [plastocyanin] + reduced [2Fe-2S]-[ferredoxin]. In terms of biological role, apoprotein for the two 4Fe-4S centers FA and FB of photosystem I (PSI); essential for photochemical activity. FB is the terminal electron acceptor of PSI, donating electrons to ferredoxin. The C-terminus interacts with PsaA/B/D and helps assemble the protein into the PSI complex. Required for binding of PsaD and PsaE to PSI. PSI is a plastocyanin/cytochrome c6-ferredoxin oxidoreductase, converting photonic excitation into a charge separation, which transfers an electron from the donor P700 chlorophyll pair to the spectroscopically characterized acceptors A0, A1, FX, FA and FB in turn. The chain is Photosystem I iron-sulfur center from Euglena gracilis.